Reading from the N-terminus, the 331-residue chain is Pectate lyase B (331 aa).

An N-terminal signal peptide occupies residues 1–25 (MKFTGSPLLWPSWLPLPAPPPPLPS). An N-linked (GlcNAc...) asparagine glycan is attached at N99. The Ca(2+) site is built by D139, D169, and D173. Residue R226 is part of the active site.

This sequence belongs to the polysaccharide lyase 1 family. The cofactor is Ca(2+).

Its subcellular location is the secreted. It catalyses the reaction Eliminative cleavage of (1-&gt;4)-alpha-D-galacturonan to give oligosaccharides with 4-deoxy-alpha-D-galact-4-enuronosyl groups at their non-reducing ends.. Its pathway is glycan metabolism; pectin degradation; 2-dehydro-3-deoxy-D-gluconate from pectin: step 2/5. Functionally, acts as a virulence factor active in plant tissue maceration. The protein is Pectate lyase B (PLB) of Colletotrichum gloeosporioides (Anthracnose fungus).